Consider the following 550-residue polypeptide: Chaperonin GroEL (550 aa).

Residues 30–33 (TLGP), lysine 51, 87–91 (DGTTT), glycine 415, 479–481 (NAA), and aspartate 495 each bind ATP. A disordered region spans residues 526 to 550 (KDEKSDLGNSSAPSAGGMGGMGGMM). Gly residues predominate over residues 541-550 (GGMGGMGGMM).

Belongs to the chaperonin (HSP60) family. As to quaternary structure, forms a cylinder of 14 subunits composed of two heptameric rings stacked back-to-back. Interacts with the co-chaperonin GroES.

The protein resides in the cytoplasm. The catalysed reaction is ATP + H2O + a folded polypeptide = ADP + phosphate + an unfolded polypeptide.. Together with its co-chaperonin GroES, plays an essential role in assisting protein folding. The GroEL-GroES system forms a nano-cage that allows encapsulation of the non-native substrate proteins and provides a physical environment optimized to promote and accelerate protein folding. This is Chaperonin GroEL from Buchnera aphidicola subsp. Baizongia pistaciae (strain Bp).